Reading from the N-terminus, the 493-residue chain is Serine/threonine-protein kinase 3 (493 aa).

The Protein kinase domain maps to 26-277 (FDVLEKLGEG…ATQLLQHPFI (252 aa)). Residues 32–40 (LGEGSYGSV) and lysine 55 each bind ATP. Catalysis depends on aspartate 145, which acts as the Proton acceptor. A Phosphothreonine; by autocatalysis modification is found at threonine 179. The stretch at 286 to 327 (LRDLITEAMDIKAKRHEELQRELEEEDENSEEDELDSHTMVK) forms a coiled coil. Disordered stretches follow at residues 303–336 (ELQR…AGTM) and 369–414 (DDEE…NCNQ). Acidic residues predominate over residues 308–320 (LEEEDENSEEDEL). Polar residues predominate over residues 325–336 (MVKTNSESAGTM). The segment covering 369 to 378 (DDEEEEEEED) has biased composition (acidic residues). Basic and acidic residues predominate over residues 398-410 (YFDKQDSKNKPHD). An SARAH domain is found at 439 to 486 (FDFLKNLSFEELQMRLKALDPMMEREIEDLRQRYNAKRQPILDAMDAK). The stretch at 444 to 477 (NLSFEELQMRLKALDPMMEREIEDLRQRYNAKRQ) forms a coiled coil.

Belongs to the protein kinase superfamily. STE Ser/Thr protein kinase family. STE20 subfamily. Homodimer; mediated via the coiled-coil region. Mg(2+) is required as a cofactor.

It is found in the cytoplasm. The protein localises to the nucleus. It catalyses the reaction L-seryl-[protein] + ATP = O-phospho-L-seryl-[protein] + ADP + H(+). It carries out the reaction L-threonyl-[protein] + ATP = O-phospho-L-threonyl-[protein] + ADP + H(+). With respect to regulation, inhibited by the C-terminal non-catalytic region. Activated by caspase-cleavage. Full activation also requires homodimerization and autophosphorylation of Thr-179. Functionally, stress-activated, pro-apoptotic kinase which, following caspase-cleavage, enters the nucleus and induces chromatin condensation followed by internucleosomal DNA fragmentation. Key component of the Hippo signaling pathway which plays a pivotal role in organ size control and tumor suppression by restricting proliferation and promoting apoptosis. The core of this pathway is composed of a kinase cascade wherein stk3/mst2 and stk4/mst1, in complex with its regulatory protein sav1, phosphorylates and activates lats1/2 in complex with its regulatory protein mob1, which in turn phosphorylates and inactivates yap1 oncoprotein and wwtr1/taz. Phosphorylation of yap1 by lats2 inhibits its translocation into the nucleus to regulate cellular genes important for cell proliferation, cell death, and cell migration. The protein is Serine/threonine-protein kinase 3 (stk3) of Xenopus laevis (African clawed frog).